Consider the following 406-residue polypeptide: Ascaroside receptor GPR2 (406 aa).

Over 1 to 29 (MTQLPYLLDRRGGALAAPATAWGDMMLNR) the chain is Extracellular. Residues 30-50 (ALFSVALLSSVGSAWVVLSYA) traverse the membrane as a helical segment. At 51–61 (CIKELRSYRHQ) the chain is on the cytoplasmic side. Residues 62 to 82 (LILGLAISDLLMSLNFMFSAG) traverse the membrane as a helical segment. Over 83–107 (WNVAGGDLALEESRTACSVNGFLTQ) the chain is Extracellular. A disulfide bridge connects residues cysteine 99 and cysteine 173. The helical transmembrane segment at 108 to 128 (VFVVQTDWWILVIAIATYIIL) threads the bilayer. Residues 129–143 (GNFKTQSQFIQTHVW) are Cytoplasmic-facing. The chain crosses the membrane as a helical span at residues 144-164 (IPWVGPWVLSIIIAAICHGVL). At 165-185 (GYGYIGGWCWLTSDLMRLLIN) the chain is on the extracellular side. The chain crosses the membrane as a helical span at residues 186 to 206 (FIPRWLIVIAIALIYIRLYMI). Over 207–326 (VRKARKWDIE…AAQLKRIAKK (120 aa)) the chain is Cytoplasmic. A helical membrane pass occupies residues 327–347 (MMVYPVAYAIIWACPTAIRIY). Over 348–356 (QGTTGSRAP) the chain is Extracellular. The chain crosses the membrane as a helical span at residues 357–377 (LWITIVDKSCIVIQGLVDAVV). The Cytoplasmic segment spans residues 378-406 (YGLNERAWQGWRDHIRRIIYKNEGGRIIG).

This sequence belongs to the G-protein coupled receptor 1 family. Interacts with ascaroside receptor GPR3; may form a functional heterodimer. Interacts with guanine nucleotide-binding protein alpha GPA2; to activate adenylate cyclase and positively regulate nematode trap formation.

Its subcellular location is the cell membrane. G protein-coupled receptor that senses nematode ascaroside pheromones and signals via adenylate cyclase to positively regulate trap formation for nematode capture. The polypeptide is Ascaroside receptor GPR2 (Arthrobotrys oligospora (strain ATCC 24927 / CBS 115.81 / DSM 1491) (Nematode-trapping fungus)).